Reading from the N-terminus, the 31-residue chain is Cyclotide glopa C (31 aa).

A cross-link (cyclopeptide (Gly-Asn)) is located at residues 1-31 (GDLPICGETCFEGGNCRIPGCTCVWPFCSKN). Cystine bridges form between C6–C21, C10–C23, and C16–C28.

In terms of processing, this is a cyclic peptide.

Probably participates in a plant defense mechanism. This chain is Cyclotide glopa C, found in Gloeospermum pauciflorum.